Consider the following 78-residue polypeptide: Large ribosomal subunit protein bL28 (78 aa).

This sequence belongs to the bacterial ribosomal protein bL28 family.

This Azoarcus sp. (strain BH72) protein is Large ribosomal subunit protein bL28.